The chain runs to 259 residues: Hydroxyacylglutathione hydrolase (259 aa).

7 residues coordinate Zn(2+): histidine 56, histidine 58, aspartate 60, histidine 61, histidine 112, aspartate 133, and histidine 171. Residues 224–238 (RTRETSVKEKADERS) show a composition bias toward basic and acidic residues. A disordered region spans residues 224 to 245 (RTRETSVKEKADERSSGQNTSQ).

It belongs to the metallo-beta-lactamase superfamily. Glyoxalase II family. As to quaternary structure, monomer. Zn(2+) is required as a cofactor.

It catalyses the reaction an S-(2-hydroxyacyl)glutathione + H2O = a 2-hydroxy carboxylate + glutathione + H(+). It participates in secondary metabolite metabolism; methylglyoxal degradation; (R)-lactate from methylglyoxal: step 2/2. Functionally, thiolesterase that catalyzes the hydrolysis of S-D-lactoyl-glutathione to form glutathione and D-lactic acid. The protein is Hydroxyacylglutathione hydrolase of Pseudomonas savastanoi pv. phaseolicola (strain 1448A / Race 6) (Pseudomonas syringae pv. phaseolicola (strain 1448A / Race 6)).